Reading from the N-terminus, the 302-residue chain is MEPTGIVVLDKPKGWTSHDCVHQMRKWFQTRKVGHTGTLDPEVDGVLPICIGKATKVVKYMSDYDKTYIGEVTFGVATTTEDAHGEVVEEKRVNKPFTRTEIEALLQAFIGKIEQTPPYYSAVKVNGKRLYEYARAGIEVERPTRTVEIKALTLTEITTAKPGCFSFAFSVTCTKGTYIRTLAVDIGKKAGYPAHMSKLTRTASGPFTQADAIPLSAFAEMSLDERLNKLRPLDTALQHFPRVTADKELEKRIRNGAVLEKSASFGDGRFLFYNEQGDCLALYQAHPTKAGLIKPETLFCHV.

Residue Asp40 is the Nucleophile of the active site.

This sequence belongs to the pseudouridine synthase TruB family. Type 1 subfamily.

The catalysed reaction is uridine(55) in tRNA = pseudouridine(55) in tRNA. Its function is as follows. Responsible for synthesis of pseudouridine from uracil-55 in the psi GC loop of transfer RNAs. The sequence is that of tRNA pseudouridine synthase B from Shouchella clausii (strain KSM-K16) (Alkalihalobacillus clausii).